Consider the following 116-residue polypeptide: MRHRHAGKLLGRSYEHRKALYRNLMIALIEHKKIKTTLAKARAVQPEVEALISIAREDTPHARRMALSKLASKEAMRKLFTFAPTTYGGRNGGYTRITKLGPRRGDGAEMALIELI.

The protein belongs to the bacterial ribosomal protein bL17 family. As to quaternary structure, part of the 50S ribosomal subunit. Contacts protein L32.

In Chloroflexus aurantiacus (strain ATCC 29366 / DSM 635 / J-10-fl), this protein is Large ribosomal subunit protein bL17.